Reading from the N-terminus, the 1389-residue chain is DNA-directed RNA polymerase subunit beta'' (1389 aa).

Zn(2+)-binding residues include cysteine 224, cysteine 295, cysteine 302, and cysteine 305.

The protein belongs to the RNA polymerase beta' chain family. RpoC2 subfamily. As to quaternary structure, in plastids the minimal PEP RNA polymerase catalytic core is composed of four subunits: alpha, beta, beta', and beta''. When a (nuclear-encoded) sigma factor is associated with the core the holoenzyme is formed, which can initiate transcription. It depends on Zn(2+) as a cofactor.

The protein resides in the plastid. It is found in the chloroplast. It catalyses the reaction RNA(n) + a ribonucleoside 5'-triphosphate = RNA(n+1) + diphosphate. In terms of biological role, DNA-dependent RNA polymerase catalyzes the transcription of DNA into RNA using the four ribonucleoside triphosphates as substrates. This chain is DNA-directed RNA polymerase subunit beta'', found in Morus indica (Mulberry).